We begin with the raw amino-acid sequence, 858 residues long: Phosphoenolpyruvate carboxylase (858 aa).

Active-site residues include His-145 and Lys-531.

The protein belongs to the PEPCase type 1 family. Mg(2+) is required as a cofactor.

It carries out the reaction oxaloacetate + phosphate = phosphoenolpyruvate + hydrogencarbonate. Forms oxaloacetate, a four-carbon dicarboxylic acid source for the tricarboxylic acid cycle. The polypeptide is Phosphoenolpyruvate carboxylase (Thermus thermophilus (strain ATCC BAA-163 / DSM 7039 / HB27)).